We begin with the raw amino-acid sequence, 220 residues long: NADH-quinone oxidoreductase subunit I (220 aa).

2 4Fe-4S ferredoxin-type domains span residues 71–102 (LQRL…IITH) and 112–141 (DSYT…MGNR). The [4Fe-4S] cluster site is built by Cys-82, Cys-85, Cys-88, Cys-92, Cys-121, Cys-124, Cys-127, and Cys-131. Positions 187-220 (MQATPLDYVQEPSKEESKEETPTNPESNKGDENV) are disordered. A compositionally biased stretch (basic and acidic residues) spans 198–207 (PSKEESKEET).

This sequence belongs to the complex I 23 kDa subunit family. As to quaternary structure, NDH-1 is composed of 14 different subunits. Subunits NuoA, H, J, K, L, M, N constitute the membrane sector of the complex. Requires [4Fe-4S] cluster as cofactor.

It is found in the cell inner membrane. It catalyses the reaction a quinone + NADH + 5 H(+)(in) = a quinol + NAD(+) + 4 H(+)(out). Its function is as follows. NDH-1 shuttles electrons from NADH, via FMN and iron-sulfur (Fe-S) centers, to quinones in the respiratory chain. The immediate electron acceptor for the enzyme in this species is believed to be ubiquinone. Couples the redox reaction to proton translocation (for every two electrons transferred, four hydrogen ions are translocated across the cytoplasmic membrane), and thus conserves the redox energy in a proton gradient. The polypeptide is NADH-quinone oxidoreductase subunit I (Helicobacter pylori (strain HPAG1)).